Consider the following 911-residue polypeptide: Valine--tRNA ligase (911 aa).

The 'HIGH' region signature appears at 53–63 (PNVTGTLHLGH). Positions 533-537 (KMSKS) match the 'KMSKS' region motif. ATP is bound at residue lysine 536. Residues 845-910 (KEIERLTKEL…NRLAMLRSMQ (66 aa)) are a coiled coil.

Belongs to the class-I aminoacyl-tRNA synthetase family. ValS type 1 subfamily. In terms of assembly, monomer.

The protein localises to the cytoplasm. The enzyme catalyses tRNA(Val) + L-valine + ATP = L-valyl-tRNA(Val) + AMP + diphosphate. Its function is as follows. Catalyzes the attachment of valine to tRNA(Val). As ValRS can inadvertently accommodate and process structurally similar amino acids such as threonine, to avoid such errors, it has a 'posttransfer' editing activity that hydrolyzes mischarged Thr-tRNA(Val) in a tRNA-dependent manner. In Symbiobacterium thermophilum (strain DSM 24528 / JCM 14929 / IAM 14863 / T), this protein is Valine--tRNA ligase.